A 79-amino-acid polypeptide reads, in one-letter code: Large ribosomal subunit protein uL24 (79 aa).

It belongs to the universal ribosomal protein uL24 family. As to quaternary structure, part of the 50S ribosomal subunit.

One of two assembly initiator proteins, it binds directly to the 5'-end of the 23S rRNA, where it nucleates assembly of the 50S subunit. Functionally, one of the proteins that surrounds the polypeptide exit tunnel on the outside of the subunit. In Lactobacillus johnsonii (strain CNCM I-12250 / La1 / NCC 533), this protein is Large ribosomal subunit protein uL24.